Here is a 429-residue protein sequence, read N- to C-terminus: Histidine--tRNA ligase (429 aa).

It belongs to the class-II aminoacyl-tRNA synthetase family. Homodimer.

It is found in the cytoplasm. It carries out the reaction tRNA(His) + L-histidine + ATP = L-histidyl-tRNA(His) + AMP + diphosphate + H(+). This is Histidine--tRNA ligase from Streptococcus mutans serotype c (strain ATCC 700610 / UA159).